Here is a 253-residue protein sequence, read N- to C-terminus: Zinc import ATP-binding protein ZnuC (253 aa).

Positions Val6 to Ala227 constitute an ABC transporter domain. An ATP-binding site is contributed by Gly38–Ser45.

This sequence belongs to the ABC transporter superfamily. Zinc importer (TC 3.A.1.15.5) family. The complex is composed of two ATP-binding proteins (ZnuC), two transmembrane proteins (ZnuB) and a solute-binding protein (ZnuA).

Its subcellular location is the cell inner membrane. The enzyme catalyses Zn(2+)(out) + ATP(in) + H2O(in) = Zn(2+)(in) + ADP(in) + phosphate(in) + H(+)(in). Its function is as follows. Part of the ABC transporter complex ZnuABC involved in zinc import. Responsible for energy coupling to the transport system. In Yersinia pestis bv. Antiqua (strain Antiqua), this protein is Zinc import ATP-binding protein ZnuC.